Reading from the N-terminus, the 374-residue chain is 5-methylthioribulose-1-phosphate isomerase (374 aa).

It belongs to the RuBisCO large chain family. Type IV subfamily.

It catalyses the reaction 5-(methylsulfanyl)-D-ribulose 1-phosphate = S-methyl-1-thio-D-xylulose 5-phosphate. The catalysed reaction is 5-(methylsulfanyl)-D-ribulose 1-phosphate = 1-(methylsulfanyl)ribulose 5-phosphate. Its pathway is amino-acid biosynthesis; L-methionine biosynthesis via salvage pathway. The protein operates within metabolic intermediate biosynthesis; 1-deoxy-D-xylulose 5-phosphate biosynthesis. Its function is as follows. Catalyzes the conversion of 5-methylthio-D-ribulose 1-phosphate (MTRu-1P) to a 3:1 mixture of 1-methylthioxylulose 5-phosphate (MTXu-5P) and 1-methylthioribulose 5-phosphate (MTRu-5P). Involved in the MTA-isoprenoid shunt of the methionine salvage pathway. This Rhodospirillum rubrum (strain ATCC 11170 / ATH 1.1.1 / DSM 467 / LMG 4362 / NCIMB 8255 / S1) protein is 5-methylthioribulose-1-phosphate isomerase.